We begin with the raw amino-acid sequence, 301 residues long: uncharacterized protein (301 aa).

A signal peptide spans 1-22 (MPGRFTVALVIALGGTCGVADA). One can recognise a GP-PDE domain in the interval 31-300 (PMIVAHRAGT…DSPLAAQQWR (270 aa)).

This is an uncharacterized protein from Mycobacterium tuberculosis (strain ATCC 25618 / H37Rv).